Consider the following 341-residue polypeptide: MIKLNQIVKRYHTKDKDVLAVDHVDLNIESGSIFGVIGFSGAGKSTLIRMFNNLESPTSGEIIIDGDNISQLSKSQLRKKRQKVSMIFQHFNLLWSRSVLKNVTFPLEIAGVPSGLAKQKALELIELVGLKGRESAYPSELSGGQKQRVGIARALANDPDVLLCDEATSALDPQTTDEILDLLLKVREQQNLTIVLITHEMHVIRRICDEVAVMENGKVIEQGAVSKVFENPQHEVTKRFVKDDLNDDFEDSLEYLEPLDHDAYIVRLNFTGENTTEPIISYMTTTHNIDVNILEADIKNTKNGSFGFLVIHIPHISEEHFKQFKHNLHEQHVNVEVLKHG.

Residues 2-241 (IKLNQIVKRY…PQHEVTKRFV (240 aa)) form the ABC transporter domain. Position 38–45 (38–45 (GFSGAGKS)) interacts with ATP.

The protein belongs to the ABC transporter superfamily. Methionine importer (TC 3.A.1.24) family. In terms of assembly, the complex is composed of two ATP-binding proteins (MetN), two transmembrane proteins (MetI) and a solute-binding protein (MetQ).

The protein localises to the cell membrane. It catalyses the reaction L-methionine(out) + ATP + H2O = L-methionine(in) + ADP + phosphate + H(+). It carries out the reaction D-methionine(out) + ATP + H2O = D-methionine(in) + ADP + phosphate + H(+). Functionally, part of the ABC transporter complex MetNIQ involved in methionine import. Responsible for energy coupling to the transport system. This Staphylococcus epidermidis (strain ATCC 35984 / DSM 28319 / BCRC 17069 / CCUG 31568 / BM 3577 / RP62A) protein is Methionine import ATP-binding protein MetN 2.